Here is a 71-residue protein sequence, read N- to C-terminus: Protein KleB (71 aa).

Residues Val-9–Ile-28 constitute a DNA-binding region (H-T-H motif).

The sequence is that of Protein KleB (kleB) from Escherichia coli.